Here is a 475-residue protein sequence, read N- to C-terminus: Zinc finger protein 383 (475 aa).

The region spanning 6–77 (VMFSDVSIDF…GRELTRGLCS (72 aa)) is the KRAB domain. 11 consecutive C2H2-type zinc fingers follow at residues 170–192 (FECK…QRIH), 198–220 (YECK…LKIH), 226–248 (FECK…QRIH), 254–276 (YECK…QRIH), 282–304 (YACK…VRIH), 310–332 (YECK…QRIH), 338–360 (YECK…QRIH), 366–388 (YDCK…QRIH), 394–416 (FECL…QRIH), 422–444 (YECN…LRIH), and 450–472 (YNCK…QGIH).

Belongs to the krueppel C2H2-type zinc-finger protein family.

The protein resides in the nucleus. Its subcellular location is the cytoplasm. May function as a transcriptional repressor, suppressing transcriptional activities mediated by MAPK signaling pathways. The chain is Zinc finger protein 383 (ZNF383) from Macaca fascicularis (Crab-eating macaque).